Reading from the N-terminus, the 271-residue chain is Phosphonates import ATP-binding protein PhnC 2 (271 aa).

Positions 2–245 constitute an ABC transporter domain; the sequence is LTIDKLTKRF…VARDIYGAGA (244 aa). 34-41 provides a ligand contact to ATP; the sequence is GRSGAGKS.

Belongs to the ABC transporter superfamily. Phosphonates importer (TC 3.A.1.9.1) family. In terms of assembly, the complex is composed of two ATP-binding proteins (PhnC), two transmembrane proteins (PhnE) and a solute-binding protein (PhnD).

It localises to the cell inner membrane. It catalyses the reaction phosphonate(out) + ATP + H2O = phosphonate(in) + ADP + phosphate + H(+). Its function is as follows. Part of the ABC transporter complex PhnCDE involved in phosphonates import. Responsible for energy coupling to the transport system. The sequence is that of Phosphonates import ATP-binding protein PhnC 2 from Roseobacter denitrificans (strain ATCC 33942 / OCh 114) (Erythrobacter sp. (strain OCh 114)).